A 458-amino-acid polypeptide reads, in one-letter code: MDYRRDGQNDQHQTEPSHTEQQNTENQKLIGHSEQELLDAPVSYEAGRQETASALEMEKQETAVKKEKKRRAAWLSPILGGIIGGGLMLGIAPYLPSDQNQATETASANKQVQSDNFTTAPITNASNIADMVEDLEPTIVGISNIQTSQNNTFGTGGGSSSESESGTGSGVIFKKDSDKAYIITNNHVVEGANKLTVTLYNGETETAKLVGSDTITDLAVLEISGKNVKKVASFGDSSQLRTGEKVIAIGNPLGQQFSGTVTQGIISGLNRTIDVDTTQGTVEMNVLQTDAAINPGNSGGPLINASGQVIGINSLKVSESGVESLGFAIPSNDVEPIVDQLLQNGKVDRPFLGVQMIDMSQVPETYQENTLGLFGDQLGKGVYVKEVQANSPAEKAGIKSEDVIVKLNGKDVESSADIRQILYKDLKVGDKTTIQVLRKGKTKTLNATLTKQTESSSS.

Residues 1-18 (MDYRRDGQNDQHQTEPSH) show a composition bias toward basic and acidic residues. Residues 1–42 (MDYRRDGQNDQHQTEPSHTEQQNTENQKLIGHSEQELLDAPV) form a disordered region. Residues 1–71 (MDYRRDGQND…TAVKKEKKRR (71 aa)) are Cytoplasmic-facing. A helical transmembrane segment spans residues 72–92 (AAWLSPILGGIIGGGLMLGIA). The Extracellular segment spans residues 93–458 (PYLPSDQNQA…LTKQTESSSS (366 aa)). A disordered region spans residues 146 to 170 (QTSQNNTFGTGGGSSSESESGTGSG). Residues H187, D217, and S298 each act as charge relay system in the active site. Residues 296 to 298 (GNS) and 352 to 356 (LGVQM) contribute to the substrate site. A PDZ domain is found at 356-440 (MIDMSQVPET…KTTIQVLRKG (85 aa)).

It belongs to the peptidase S1C family.

Its subcellular location is the cell membrane. It carries out the reaction Acts on substrates that are at least partially unfolded. The cleavage site P1 residue is normally between a pair of hydrophobic residues, such as Val-|-Val.. In terms of biological role, degrades abnormal exported proteins and responsible for the propeptide processing of a natural pro-protein and for the maturation of a native protein. It also plays a prominent role in stress (heat shock, ethanol, puromycin and NaCl) resistance during active exponential growth. The polypeptide is Serine protease Do-like HtrB (htrB) (Bacillus subtilis (strain 168)).